Reading from the N-terminus, the 248-residue chain is 1-(5-phosphoribosyl)-5-[(5-phosphoribosylamino)methylideneamino] imidazole-4-carboxamide isomerase (248 aa).

The Proton acceptor role is filled by aspartate 17. Catalysis depends on aspartate 136, which acts as the Proton donor.

The protein belongs to the HisA/HisF family.

The protein resides in the cytoplasm. It carries out the reaction 1-(5-phospho-beta-D-ribosyl)-5-[(5-phospho-beta-D-ribosylamino)methylideneamino]imidazole-4-carboxamide = 5-[(5-phospho-1-deoxy-D-ribulos-1-ylimino)methylamino]-1-(5-phospho-beta-D-ribosyl)imidazole-4-carboxamide. The protein operates within amino-acid biosynthesis; L-histidine biosynthesis; L-histidine from 5-phospho-alpha-D-ribose 1-diphosphate: step 4/9. In Arthrobacter sp. (strain FB24), this protein is 1-(5-phosphoribosyl)-5-[(5-phosphoribosylamino)methylideneamino] imidazole-4-carboxamide isomerase.